The sequence spans 174 residues: U-stichotoxin-Hau2a (174 aa).

Positions Met1 to Ala18 are cleaved as a signal peptide. Residues Lys19 to Pro33 constitute a propeptide that is removed on maturation. Pro39 is modified (hydroxyproline). 2 cysteine pairs are disulfide-bonded: Cys40–Cys51 and Cys43–Cys58. Residues Arg61–Pro67 constitute a propeptide that is removed on maturation. Pro73 is subject to Hydroxyproline. 2 disulfide bridges follow: Cys74/Cys85 and Cys77/Cys92. Positions Arg95 to Pro101 are excised as a propeptide. Pro107 is modified (hydroxyproline). 2 disulfide bridges follow: Cys108–Cys119 and Cys111–Cys126. Residues Arg129–Pro135 constitute a propeptide that is removed on maturation. Position 141 is a hydroxyproline (Pro141). Disulfide bonds link Cys142/Cys153 and Cys145/Cys160. Residues Arg163–Ser174 constitute a propeptide that is removed on maturation.

Belongs to the sea anemone BBH family.

It localises to the secreted. Its subcellular location is the nematocyst. Its function is as follows. Neurotoxin that paralyzes freshwater crabs at high concentration. This Heteractis aurora (Banded sea anemone) protein is U-stichotoxin-Hau2a.